Reading from the N-terminus, the 213-residue chain is Thymidylate kinase (213 aa).

10 to 17 (GLEGAGKT) contacts ATP.

The protein belongs to the thymidylate kinase family.

It catalyses the reaction dTMP + ATP = dTDP + ADP. Phosphorylation of dTMP to form dTDP in both de novo and salvage pathways of dTTP synthesis. The chain is Thymidylate kinase from Escherichia coli O81 (strain ED1a).